The sequence spans 440 residues: Tryptophan aminotransferase-related protein 2 (440 aa).

Residues 7 to 26 traverse the membrane as a helical segment; it reads FLSWRNMLVLSLAINFSLIL. Residues tyrosine 112, 154-155, asparagine 222, 242-245, 265-268, and arginine 276 each bind pyridoxal 5'-phosphate; these read ST, DLAY, and TASK. Lysine 268 bears the N6-(pyridoxal phosphate)lysine mark.

It belongs to the alliinase family. Requires pyridoxal 5'-phosphate as cofactor. Expressed in roots, cotyledons and in the apical parts of hypocotyls. In roots, restricted to the provasculature of meristematic regions. Detected on the inner side of the apical hooks.

The protein localises to the membrane. It catalyses the reaction L-tryptophan + 2-oxoglutarate = indole-3-pyruvate + L-glutamate. It carries out the reaction L-tryptophan + pyruvate = indole-3-pyruvate + L-alanine. It functions in the pathway plant hormone metabolism; auxin biosynthesis. With respect to regulation, inhibited by L-kynurenine. Its function is as follows. Involved in auxin production. Both TAA1 and TAR2 are required for maintaining proper auxin levels in roots, while TAA1, TAR1 and TAR2 are required for proper embryo patterning. Involved in the maintenance of the root stem cell niches. The protein is Tryptophan aminotransferase-related protein 2 (TAR2) of Arabidopsis thaliana (Mouse-ear cress).